Consider the following 100-residue polypeptide: ATP synthase subunit g 2, mitochondrial (100 aa).

It belongs to the ATPase g subunit family. In terms of assembly, F-type ATPases have 2 components, CF(1) - the catalytic core - and CF(0) - the membrane proton channel. CF(0) seems to have nine subunits: a, b, c, d, e, f, g, F6 and 8 (or A6L).

It is found in the mitochondrion membrane. Functionally, mitochondrial membrane ATP synthase (F(1)F(0) ATP synthase or Complex V) produces ATP from ADP in the presence of a proton gradient across the membrane which is generated by electron transport complexes of the respiratory chain. F-type ATPases consist of two structural domains, F(1) - containing the extramembraneous catalytic core, and F(0) - containing the membrane proton channel, linked together by a central stalk and a peripheral stalk. During catalysis, ATP synthesis in the catalytic domain of F(1) is coupled via a rotary mechanism of the central stalk subunits to proton translocation. Part of the complex F(0) domain. Minor subunit located with subunit a in the membrane. This Homo sapiens (Human) protein is ATP synthase subunit g 2, mitochondrial.